The primary structure comprises 92 residues: Small ribosomal subunit protein uS19c (92 aa).

It belongs to the universal ribosomal protein uS19 family.

Its subcellular location is the plastid. The protein resides in the chloroplast. In terms of biological role, protein S19 forms a complex with S13 that binds strongly to the 16S ribosomal RNA. The sequence is that of Small ribosomal subunit protein uS19c from Piper cenocladum (Ant piper).